The following is a 204-amino-acid chain: tRNA (pseudouridine(54)-N(1))-methyltransferase (204 aa).

S-adenosyl-L-methionine-binding positions include Leu130, Gly157, 180–185 (LSPLEL), and Cys190.

Belongs to the methyltransferase superfamily. TrmY family. Homodimer.

It is found in the cytoplasm. It carries out the reaction pseudouridine(54) in tRNA + S-adenosyl-L-methionine = N(1)-methylpseudouridine(54) in tRNA + S-adenosyl-L-homocysteine + H(+). Functionally, specifically catalyzes the N1-methylation of pseudouridine at position 54 (Psi54) in tRNAs. This chain is tRNA (pseudouridine(54)-N(1))-methyltransferase, found in Methanococcus aeolicus (strain ATCC BAA-1280 / DSM 17508 / OCM 812 / Nankai-3).